The following is a 218-amino-acid chain: MTQDELKKAVGWAALDYVKPGTIVGVGTGSTAAHFIDALGSIKHQIEGAVSSSDASTAKLKSYGIPVFDCNDVDVLDIYVDGADEINGQMQMIKGGGAALTREKIIAAIARKFICIADESKQVGVLGKFPLPVEVIPMARSYVARELIKLGGLPEYRQNVLTDNGNVILDVHNLSILDAIALENQINGIAGVVTVGLFANRGADVALIGTANGVKVIG.

Substrate contacts are provided by residues 28-31 (TGST), 81-84 (DGAD), and 94-97 (KGGG). Glu-103 (proton acceptor) is an active-site residue. Substrate is bound at residue Lys-121.

It belongs to the ribose 5-phosphate isomerase family. Homodimer.

It catalyses the reaction aldehydo-D-ribose 5-phosphate = D-ribulose 5-phosphate. Its pathway is carbohydrate degradation; pentose phosphate pathway; D-ribose 5-phosphate from D-ribulose 5-phosphate (non-oxidative stage): step 1/1. Catalyzes the reversible conversion of ribose-5-phosphate to ribulose 5-phosphate. The chain is Ribose-5-phosphate isomerase A from Yersinia pseudotuberculosis serotype IB (strain PB1/+).